The sequence spans 697 residues: tRNA 5-methylaminomethyl-2-thiouridine biosynthesis bifunctional protein MnmC (697 aa).

Positions 1-269 (MNKTPLLSVS…LRQQLQQQFA (269 aa)) are tRNA (mnm(5)s(2)U34)-methyltransferase. An FAD-dependent cmnm(5)s(2)U34 oxidoreductase region spans residues 287–697 (IGGGIASASL…RKLLKGKALM (411 aa)).

In the N-terminal section; belongs to the methyltransferase superfamily. tRNA (mnm(5)s(2)U34)-methyltransferase family. This sequence in the C-terminal section; belongs to the DAO family. It depends on FAD as a cofactor.

It localises to the cytoplasm. The catalysed reaction is 5-aminomethyl-2-thiouridine(34) in tRNA + S-adenosyl-L-methionine = 5-methylaminomethyl-2-thiouridine(34) in tRNA + S-adenosyl-L-homocysteine + H(+). Catalyzes the last two steps in the biosynthesis of 5-methylaminomethyl-2-thiouridine (mnm(5)s(2)U) at the wobble position (U34) in tRNA. Catalyzes the FAD-dependent demodification of cmnm(5)s(2)U34 to nm(5)s(2)U34, followed by the transfer of a methyl group from S-adenosyl-L-methionine to nm(5)s(2)U34, to form mnm(5)s(2)U34. The sequence is that of tRNA 5-methylaminomethyl-2-thiouridine biosynthesis bifunctional protein MnmC from Shewanella frigidimarina (strain NCIMB 400).